Reading from the N-terminus, the 621-residue chain is 2-hydroxyacyl-CoA lyase 2 (621 aa).

The helical transmembrane segment at 7–29 (LGCSLGAALGGVIFASYKLGLLY) threads the bilayer. A thiamine diphosphate-binding site is contributed by Glu-87. The tract at residues 459-539 (DFVGSAAYIM…VIALVGNDAC (81 aa)) is thiamine pyrophosphate binding. Mg(2+) contacts are provided by Asp-510 and Asn-536.

This sequence belongs to the TPP enzyme family. Requires Mg(2+) as cofactor. The cofactor is thiamine diphosphate.

The protein localises to the endoplasmic reticulum membrane. The catalysed reaction is 2-hydroxyoctadecanoyl-CoA = heptadecanal + formyl-CoA. It catalyses the reaction (2R)-hydroxyhexadecanoyl-CoA = pentadecanal + formyl-CoA. In terms of biological role, endoplasmic reticulum 2-OH acyl-CoA lyase involved in the cleavage (C1 removal) reaction in the fatty acid alpha-oxydation in a thiamine pyrophosphate (TPP)-dependent manner. The polypeptide is 2-hydroxyacyl-CoA lyase 2 (ilvbl) (Danio rerio (Zebrafish)).